A 193-amino-acid chain; its full sequence is Chaperone protein TorD (193 aa).

This sequence belongs to the TorD/DmsD family. TorD subfamily.

Its subcellular location is the cytoplasm. Its function is as follows. Involved in the biogenesis of TorA. Acts on TorA before the insertion of the molybdenum cofactor and, as a result, probably favors a conformation of the apoenzyme that is competent for acquiring the cofactor. The chain is Chaperone protein TorD from Histophilus somni (strain 129Pt) (Haemophilus somnus).